Here is a 767-residue protein sequence, read N- to C-terminus: Transferrin receptor protein 1 (767 aa).

Over 1-67 (MDQARSAFSN…LTKPKRFNGS (67 aa)) the chain is Cytoplasmic. 2 positions are modified to phosphoserine: serine 9 and serine 18. At tyrosine 19 the chain carries Phosphotyrosine. Positions 19 to 22 (YTRF) match the Endocytosis signal motif. Threonine 20 carries the post-translational modification Phosphothreonine. At serine 23 the chain carries Phosphoserine. The Stop-transfer sequence signature appears at 60-63 (KPKR). A helical; Signal-anchor for type II membrane protein transmembrane segment spans residues 68–88 (FCYAVIAVIIFFLIGFMIGYL). Cysteine 69 is lipidated: S-palmitoyl cysteine. Residues 89–767 (GYCKRVEPKS…GDIWDIDNEF (679 aa)) are Extracellular-facing. Over residues 96–110 (PKSECGRSGDSKEIE) the composition is skewed to basic and acidic residues. The segment at 96-122 (PKSECGRSGDSKEIEGTEPPETEEYFP) is disordered. Positions 111-121 (GTEPPETEEYF) are enriched in acidic residues. Asparagine 211, asparagine 258, and asparagine 324 each carry an N-linked (GlcNAc...) asparagine glycan. The 91-residue stretch at 230 to 320 (SKATTVTGKL…GTGDPYTPGF (91 aa)) folds into the PA domain. Residues 576–767 (TMDTYEVLSQ…GDIWDIDNEF (192 aa)) are ligand-binding. A Cell attachment site motif is present at residues 653 to 655 (RGD). A glycan (N-linked (GlcNAc...) asparagine) is linked at asparagine 734.

Belongs to the peptidase M28 family. M28B subfamily. As to quaternary structure, homodimer; disulfide-linked. Binds one transferrin or HFE molecule per subunit. Interacts with SH3BP4. Interacts with STEAP3; facilitates TFRC endocytosis in erythroid precursor cells. In terms of processing, stearoylated by ZDHHC6 which inhibits TFRC-mediated activation of the JNK pathway and promotes mitochondrial fragmentation. Stearoylation does not affect iron uptake.

Its subcellular location is the cell membrane. It is found in the melanosome. In terms of biological role, cellular uptake of iron occurs via receptor-mediated endocytosis of ligand-occupied transferrin receptor into specialized endosomes. Endosomal acidification leads to iron release. The apotransferrin-receptor complex is then recycled to the cell surface with a return to neutral pH and the concomitant loss of affinity of apotransferrin for its receptor. Transferrin receptor is necessary for development of erythrocytes and the nervous system. Positively regulates T and B cell proliferation through iron uptake. Acts as a lipid sensor that regulates mitochondrial fusion by regulating activation of the JNK pathway. When dietary levels of stearate (C18:0) are low, promotes activation of the JNK pathway, resulting in HUWE1-mediated ubiquitination and subsequent degradation of the mitofusin MFN2 and inhibition of mitochondrial fusion. When dietary levels of stearate (C18:0) are high, TFRC stearoylation inhibits activation of the JNK pathway and thus degradation of the mitofusin MFN2. Mediates uptake of NICOL1 into fibroblasts where it may regulate extracellular matrix production. The polypeptide is Transferrin receptor protein 1 (TFRC) (Equus caballus (Horse)).